Here is a 118-residue protein sequence, read N- to C-terminus: Large ribosomal subunit protein uL22c (118 aa).

Belongs to the universal ribosomal protein uL22 family. In terms of assembly, part of the 50S ribosomal subunit.

It is found in the plastid. The protein localises to the chloroplast. This protein binds specifically to 23S rRNA. Its function is as follows. The globular domain of the protein is located near the polypeptide exit tunnel on the outside of the subunit, while an extended beta-hairpin is found that lines the wall of the exit tunnel in the center of the 70S ribosome. This Rhodomonas salina (Cryptomonas salina) protein is Large ribosomal subunit protein uL22c (rpl22).